Here is a 92-residue protein sequence, read N- to C-terminus: YcgL domain-containing protein Shewana3_2381 (92 aa).

In terms of domain architecture, YcgL spans 1 to 85 (MLCAVYKSSR…PQVNLLAEHR (85 aa)).

The sequence is that of YcgL domain-containing protein Shewana3_2381 from Shewanella sp. (strain ANA-3).